Consider the following 382-residue polypeptide: MSDPIIIIGSGFAAYQLVKSVRRLDAHIPIQIFTADDGAEYNKPDLSHVFSKRQTAADLVVKSGEAFAEEYNVQLHAHTQVERVLTQQQQVVANGRCYPYSKLVFATGAQAFVPPMRGDGLAKVMTLNSLQEYQAAEQPLSRAQHVLVIGGGLIGVEIALDLATSGKQVTVVEPNARLLANLLPEFIALPLEQQLMKHGIQLALNSRVESVTEQGQTLAIALHDGREFAVDAVLCAAGLKANTAVAREAGLSVERGICVDHQLNTSDPHIYALGDCAQIEGRMLPYLQPIVLSANVLAKQLVGQEARLTLPPMMVKVKTPSYPIQLAGDFSPESHWQVQLSPEGIVAKAQSPLGDFTGFVVTGEYVTQAFPLLRELSQRANG.

The protein belongs to the FAD-dependent oxidoreductase family. It depends on FAD as a cofactor.

Its subcellular location is the cytoplasm. The enzyme catalyses 2 reduced [nitric oxide reductase rubredoxin domain] + NAD(+) + H(+) = 2 oxidized [nitric oxide reductase rubredoxin domain] + NADH. Its pathway is nitrogen metabolism; nitric oxide reduction. Functionally, one of at least two accessory proteins for anaerobic nitric oxide (NO) reductase. Reduces the rubredoxin moiety of NO reductase. This chain is Nitric oxide reductase FlRd-NAD(+) reductase, found in Vibrio vulnificus (strain CMCP6).